The following is a 120-amino-acid chain: UPF0231 protein YacL (120 aa).

Belongs to the UPF0231 family.

The polypeptide is UPF0231 protein YacL (Escherichia fergusonii (strain ATCC 35469 / DSM 13698 / CCUG 18766 / IAM 14443 / JCM 21226 / LMG 7866 / NBRC 102419 / NCTC 12128 / CDC 0568-73)).